An 887-amino-acid chain; its full sequence is Degenerin-like protein unc-105 (887 aa).

The disordered stretch occupies residues M1–M33. The Cytoplasmic portion of the chain corresponds to M1–W93. A helical membrane pass occupies residues F94–I114. The Extracellular portion of the chain corresponds to S115 to T698. Residues N244, N450, N473, N581, and N599 are each glycosylated (N-linked (GlcNAc...) asparagine). A helical transmembrane segment spans residues G699–A719. The Cytoplasmic portion of the chain corresponds to T720 to K887. 2 disordered regions span residues A794–C815 and S859–K887.

This sequence belongs to the amiloride-sensitive sodium channel (TC 1.A.6) family. As to expression, expressed in body wall muscle.

It is found in the membrane. Its function is as follows. Ion channel which is permeable to small monovalent cations. Shown not to be H+-ion gated. May be mechanosensitive and is required for growth and muscle development. The polypeptide is Degenerin-like protein unc-105 (unc-105) (Caenorhabditis elegans).